The chain runs to 512 residues: Calcium-dependent protein kinase 18 (512 aa).

The segment at 1–25 (MGLCSSSSARRDAGTPGGGNGAGNK) is disordered. Glycine 2 carries N-myristoyl glycine lipidation. The 261-residue stretch at 52–312 (YALGKLLGHG…AAQALSHEWV (261 aa)) folds into the Protein kinase domain. Residues 58 to 66 (LGHGQFGYT) and lysine 81 each bind ATP. Residue aspartate 178 is the Proton acceptor of the active site. The segment at 318–348 (ASDIPLDISVLHNMRQFVKYSRFKQFALRAL) is autoinhibitory domain. EF-hand domains follow at residues 355–390 (EELS…DVPW), 392–427 (LKGP…VHQL), 434–469 (KWKS…KGSI), and 472–499 (LLEE…ASMS). Residues aspartate 368, aspartate 370, asparagine 372, threonine 374, glutamate 379, aspartate 405, asparagine 407, aspartate 409, glutamate 416, aspartate 447, aspartate 449, aspartate 451, tyrosine 453, glutamate 458, aspartate 477, aspartate 479, aspartate 481, lysine 483, and glutamate 488 each contribute to the Ca(2+) site.

Belongs to the protein kinase superfamily. Ser/Thr protein kinase family. CDPK subfamily. In terms of assembly, interacts with MPK5. In terms of processing, autophosphorylated. Phosphorylated by MPK5.

It is found in the cell membrane. It carries out the reaction L-seryl-[protein] + ATP = O-phospho-L-seryl-[protein] + ADP + H(+). The enzyme catalyses L-threonyl-[protein] + ATP = O-phospho-L-threonyl-[protein] + ADP + H(+). Its activity is regulated as follows. Activated by calcium. Autophosphorylation may play an important role in the regulation of the kinase activity. May play a role in signal transduction pathways that involve calcium as a second messenger. Functions upstream of MPK5 in a signaling pathway that represses defense gene expression and negatively regulates resistance to rice blast fungus. Phosphorylates MPK5 at Thr-14 and Thr-32 and activates MPK5 independently of MAP kinase kinase (MKK) phosphorylation. May be involved in arbuscular mycorrhizal presymbiotic phase signaling. Phosphorylates the elicitor-responsive protein ERG1 in vitro. Phosphorylation is calcium-dependent. This chain is Calcium-dependent protein kinase 18, found in Oryza sativa subsp. japonica (Rice).